The chain runs to 416 residues: MLKRDMNIADYDADLFAAIQEETVRQEEHIELIASENYTSPRVMEAQGSQLTNKYAEGYPGKRYYGGCEFVDKVETLAINRACELFGAEYANVQPHSGSQANNAVYMALLNAGDTVLGMSLAHGGHLTHGSPVNFSGKLYNIIPYGIDEAGQIDYEEMEALAIEHKPKMIIGGFSAYSQICDWARMREIADKVGAYFFVDMAHVAGLIAAGVYPNPVPHAHVVTTTTHKTLAGPRGGLILSNEGEDLYKKLNSAVFPGGQGGPLMHVIAGKAVAFKEALEPEFKEYQVRVVANAKAMVAEFLARGYNIVSGSTENHLFLVDLIDKDITGKEADAALGSANITVNKNSVPNDPRSPFVTSGIRVGSPSITRRGFSEEDAKNLAGWMCDILDNMGDESVIEATKAKVLEICKRLPVYA.

Residues Leu-121 and Gly-125–Leu-127 contribute to the (6S)-5,6,7,8-tetrahydrofolate site. Residue Lys-229 is modified to N6-(pyridoxal phosphate)lysine. (6S)-5,6,7,8-tetrahydrofolate is bound by residues Glu-245 and Ser-354 to Phe-356.

This sequence belongs to the SHMT family. Homodimer. Requires pyridoxal 5'-phosphate as cofactor.

It is found in the cytoplasm. It catalyses the reaction (6R)-5,10-methylene-5,6,7,8-tetrahydrofolate + glycine + H2O = (6S)-5,6,7,8-tetrahydrofolate + L-serine. Its pathway is one-carbon metabolism; tetrahydrofolate interconversion. The protein operates within amino-acid biosynthesis; glycine biosynthesis; glycine from L-serine: step 1/1. Functionally, catalyzes the reversible interconversion of serine and glycine with tetrahydrofolate (THF) serving as the one-carbon carrier. This reaction serves as the major source of one-carbon groups required for the biosynthesis of purines, thymidylate, methionine, and other important biomolecules. Also exhibits THF-independent aldolase activity toward beta-hydroxyamino acids, producing glycine and aldehydes, via a retro-aldol mechanism. The chain is Serine hydroxymethyltransferase from Aliivibrio salmonicida (strain LFI1238) (Vibrio salmonicida (strain LFI1238)).